Consider the following 562-residue polypeptide: Protein wntless (562 aa).

The Cytoplasmic segment spans residues 1 to 13; it reads MSGTILENLSGRK. Residues 14–34 form a helical membrane-spanning segment; that stretch reads LSILVSSLLLCQVACFLIGGL. Over 35–239 the chain is Lumenal; the sequence is YAPVPAGHQI…AIHQNGGFTQ (205 aa). N-linked (GlcNAc...) asparagine glycans are attached at residues Asn-58 and Asn-103. A helical transmembrane segment spans residues 240 to 260; that stretch reads VWLLLKSVLFPFIIGIMVWFW. The Cytoplasmic segment spans residues 261–270; sequence RRVHILQRSP. The chain crosses the membrane as a helical span at residues 271-291; sequence ALLEYMLLYLGGALSFLNLPL. The Lumenal portion of the chain corresponds to 292–311; that stretch reads EYLTLSFEMPYMLLLSDVRQ. Residues 312-332 form a helical membrane-spanning segment; the sequence is GIFYAMLLSFWLVFAGEHMLI. Topologically, residues 333-344 are cytoplasmic; it reads QDSPNKSTIRSR. The helical transmembrane segment at 345-365 threads the bilayer; that stretch reads YWKHLSAVVVGCISLFVFDIC. Residues 366-390 are Lumenal-facing; it reads ERGMQLRNPFYSIWTTPLGAKVAMS. The helical transmembrane segment at 391 to 411 threads the bilayer; the sequence is FIVLAGVSAGIYFLFLCYMVW. Residues 412–441 are Cytoplasmic-facing; the sequence is KVFKDIGDKRTSLPSMSQARRLHYEGLIYR. Residues 442-462 form a helical membrane-spanning segment; it reads FKFLMLATLLCAGLTVAGFIM. Over 463 to 482 the chain is Lumenal; that stretch reads GQMAEGHWKWNEDIEIQLTS. Residues 483-503 traverse the membrane as a helical segment; it reads AFLTGVYGMWNIYIFALLILY. At 504–562 the chain is on the cytoplasmic side; it reads APSHKQWPTMRHSDETTQSNENIVASAASEEIEFSNLPSDSNPSEISSLTSFTRKVAFD. Positions 538-562 are disordered; it reads SNLPSDSNPSEISSLTSFTRKVAFD. A compositionally biased stretch (polar residues) spans 539-556; it reads NLPSDSNPSEISSLTSFT.

Belongs to the wntless family. As to quaternary structure, interacts with wg; in the Golgi. Interacts with Vps35, a component of the retromer complex; wls stability is regulated by Vps35.

It is found in the presynaptic cell membrane. The protein resides in the postsynaptic cell membrane. The protein localises to the cell membrane. Its subcellular location is the endoplasmic reticulum membrane. It localises to the endosome membrane. It is found in the golgi apparatus membrane. Its function is as follows. A segment polarity gene required for wingless (wg)-dependent patterning processes, acting in both wg-sending cells and wg-target cells. In non-neuronal cells wls directs wg secretion. The wls traffic loop encompasses the Golgi, the cell surface, an endocytic compartment and a retrograde route leading back to the Golgi, and involves clathrin-mediated endocytosis and the retromer complex (a conserved protein complex consisting of Vps35 and Vps26). In neuronal cells (the larval motorneuron NMJ), the wg signal moves across the synapse via the release of wls-containing exosome-like vesicles. Postsynaptic wls is required for the trafficking of fz2 through the fz2-interacting protein Grip. The sequence is that of Protein wntless from Drosophila mojavensis (Fruit fly).